A 48-amino-acid chain; its full sequence is ATP synthase protein 8 (48 aa).

The helical transmembrane segment at 16–36 threads the bilayer; the sequence is GFLLMTILLVLFSQFFLPMIL.

It belongs to the ATPase protein 8 family. In terms of assembly, F-type ATPases have 2 components, CF(1) - the catalytic core - and CF(0) - the membrane proton channel.

The protein localises to the mitochondrion membrane. Its function is as follows. Mitochondrial membrane ATP synthase (F(1)F(0) ATP synthase or Complex V) produces ATP from ADP in the presence of a proton gradient across the membrane which is generated by electron transport complexes of the respiratory chain. F-type ATPases consist of two structural domains, F(1) - containing the extramembraneous catalytic core and F(0) - containing the membrane proton channel, linked together by a central stalk and a peripheral stalk. During catalysis, ATP synthesis in the catalytic domain of F(1) is coupled via a rotary mechanism of the central stalk subunits to proton translocation. Part of the complex F(0) domain. Minor subunit located with subunit a in the membrane. The polypeptide is ATP synthase protein 8 (ATP8) (Vanderwaltozyma polyspora (strain ATCC 22028 / DSM 70294 / BCRC 21397 / CBS 2163 / NBRC 10782 / NRRL Y-8283 / UCD 57-17) (Kluyveromyces polysporus)).